The sequence spans 343 residues: S-adenosylmethionine:tRNA ribosyltransferase-isomerase (343 aa).

It belongs to the QueA family. As to quaternary structure, monomer.

Its subcellular location is the cytoplasm. It catalyses the reaction 7-aminomethyl-7-carbaguanosine(34) in tRNA + S-adenosyl-L-methionine = epoxyqueuosine(34) in tRNA + adenine + L-methionine + 2 H(+). Its pathway is tRNA modification; tRNA-queuosine biosynthesis. Transfers and isomerizes the ribose moiety from AdoMet to the 7-aminomethyl group of 7-deazaguanine (preQ1-tRNA) to give epoxyqueuosine (oQ-tRNA). This is S-adenosylmethionine:tRNA ribosyltransferase-isomerase from Geobacter metallireducens (strain ATCC 53774 / DSM 7210 / GS-15).